We begin with the raw amino-acid sequence, 428 residues long: Enolase (428 aa).

Q164 lines the (2R)-2-phosphoglycerate pocket. The active-site Proton donor is E208. The Mg(2+) site is built by D245, E286, and D313. Residues K338, R367, S368, and K389 each contribute to the (2R)-2-phosphoglycerate site. Catalysis depends on K338, which acts as the Proton acceptor.

The protein belongs to the enolase family. Mg(2+) is required as a cofactor.

The protein resides in the cytoplasm. It is found in the secreted. It localises to the cell surface. The enzyme catalyses (2R)-2-phosphoglycerate = phosphoenolpyruvate + H2O. The protein operates within carbohydrate degradation; glycolysis; pyruvate from D-glyceraldehyde 3-phosphate: step 4/5. Functionally, catalyzes the reversible conversion of 2-phosphoglycerate (2-PG) into phosphoenolpyruvate (PEP). It is essential for the degradation of carbohydrates via glycolysis. The chain is Enolase from Pyrococcus horikoshii (strain ATCC 700860 / DSM 12428 / JCM 9974 / NBRC 100139 / OT-3).